The primary structure comprises 448 residues: 5-hydroxytryptamine receptor 7 (448 aa).

The Extracellular segment spans residues 1 to 86; it reads MMDVNSSGRP…INYGRVEKVV (86 aa). N-linked (GlcNAc...) asparagine glycans are attached at residues N5 and N69. The chain crosses the membrane as a helical span at residues 87 to 111; sequence IGSILTLITLLTIAGNCLVVISVCF. The Cytoplasmic segment spans residues 112–121; sequence VKKLRQPSNY. A helical transmembrane segment spans residues 122-143; that stretch reads LIVSLALADLSVAVAVMPFVSV. The Extracellular portion of the chain corresponds to 144-155; sequence TDLIGGKWIFGH. Residues 156 to 181 form a helical membrane-spanning segment; the sequence is FFCNVFIAMDVMCCTASIMTLCVISI. C158 and C234 form a disulfide bridge. D165 serves as a coordination point for serotonin. The Cytoplasmic segment spans residues 182–201; the sequence is DRYLGITRPLTYPVRQNGKC. The helical transmembrane segment at 202–222 threads the bilayer; sequence MAKMILSVWLLSASITLPPLF. The Extracellular segment spans residues 223-240; it reads GWAQNVNDDKVCLISQDF. Residues 241-263 traverse the membrane as a helical segment; the sequence is GYTIYSTAVAFYIPMSVMLFMYY. At 264 to 329 the chain is on the cytoplasmic side; it reads QIYKAARKSA…SIFKREQKAA (66 aa). The helical transmembrane segment at 330 to 355 threads the bilayer; the sequence is TTLGIIVGAFTVCWLPFFLLSTARPF. The Extracellular portion of the chain corresponds to 356-366; the sequence is ICGTSCSCIPL. The chain crosses the membrane as a helical span at residues 367–390; it reads WVERTCLWLGYANSLINPFIYAFF. Topologically, residues 391–448 are cytoplasmic; the sequence is NRDLRTTYRSLLQCQYRNINRKLSAAGMHEALKLAERPERSEFVLQNSDHCGKKGHDT. C404 carries S-palmitoyl cysteine lipidation.

This sequence belongs to the G-protein coupled receptor 1 family. In terms of tissue distribution, thalamus, hypothalamus, and the hippocampal rudiments.

It is found in the cell membrane. Its function is as follows. G-protein coupled receptor for 5-hydroxytryptamine (serotonin), a biogenic hormone that functions as a neurotransmitter, a hormone and a mitogen. Ligand binding causes a conformation change that triggers signaling via guanine nucleotide-binding proteins (G proteins) and modulates the activity of downstream effectors. HTR7 is coupled to G(s) G alpha proteins and mediates activation of adenylate cyclase activity. The polypeptide is 5-hydroxytryptamine receptor 7 (Rattus norvegicus (Rat)).